We begin with the raw amino-acid sequence, 199 residues long: Recombination protein RecR (199 aa).

The segment at 57–72 (CEICGNMDTKNICHIC) adopts a C4-type zinc-finger fold. Positions 80 to 175 (STIAIVETVA…KISRLASGIP (96 aa)) constitute a Toprim domain.

It belongs to the RecR family.

In terms of biological role, may play a role in DNA repair. It seems to be involved in an RecBC-independent recombinational process of DNA repair. It may act with RecF and RecO. The chain is Recombination protein RecR from Rickettsia typhi (strain ATCC VR-144 / Wilmington).